The chain runs to 192 residues: Thymidine kinase (192 aa).

Residues glycine 9–serine 16 and aspartate 85–glutamine 88 contribute to the ATP site. Glutamate 86 (proton acceptor) is an active-site residue. Zn(2+) contacts are provided by cysteine 143, cysteine 146, cysteine 181, and cysteine 184.

The protein belongs to the thymidine kinase family. Homotetramer.

The protein localises to the cytoplasm. It catalyses the reaction thymidine + ATP = dTMP + ADP + H(+). This Shouchella clausii (strain KSM-K16) (Alkalihalobacillus clausii) protein is Thymidine kinase.